A 481-amino-acid chain; its full sequence is F-box/FBD/LRR-repeat protein At5g18770 (481 aa).

Positions E23–N69 constitute an F-box domain. LRR repeat units lie at residues K126–A153, C159–D185, V186–L211, D214–R234, V236–D261, D289–W314, and A340–L368. The region spanning V378–L430 is the FBD domain.

The polypeptide is F-box/FBD/LRR-repeat protein At5g18770 (Arabidopsis thaliana (Mouse-ear cress)).